Here is a 229-residue protein sequence, read N- to C-terminus: Transcriptional regulatory protein CreB (229 aa).

One can recognise a Response regulatory domain in the interval 5–119 (TVWLVEDEQG…EVCARVRTLL (115 aa)). Asp-54 carries the 4-aspartylphosphate modification. The ompR/PhoB-type DNA-binding region spans 129 to 228 (SPVIRIGHFE…HRGMGYSLRG (100 aa)).

In terms of processing, phosphorylated by CreC.

Its subcellular location is the cytoplasm. Member of the two-component regulatory system CreC/CreB involved in catabolic regulation. This is Transcriptional regulatory protein CreB (creB) from Escherichia coli (strain K12).